Consider the following 532-residue polypeptide: Berberine bridge enzyme-like 18 (532 aa).

The first 29 residues, 1 to 29, serve as a signal peptide directing secretion; that stretch reads MKFQSFFSSVLIFFTTSTLLLSIPHPVSA. N-linked (GlcNAc...) asparagine glycosylation is found at Asn-30, Asn-33, Asn-46, Asn-59, Asn-147, Asn-169, and Asn-262. A disulfide bridge connects residues Cys-40 and Cys-102. Residues 80–254 enclose the FAD-binding PCMH-type domain; it reads DVPKPVLILT…LSWKIGLINV (175 aa). The 6-(S-cysteinyl)-8alpha-(pros-histidyl)-FAD (His-Cys) cross-link spans 117 to 179; that stretch reads HDYEGLSYVT…RTLAFPAGVC (63 aa).

It belongs to the oxygen-dependent FAD-linked oxidoreductase family. It depends on FAD as a cofactor. The FAD cofactor is bound via a bicovalent 6-S-cysteinyl, 8alpha-N1-histidyl FAD linkage.

It localises to the secreted. The protein localises to the cell wall. This is Berberine bridge enzyme-like 18 from Arabidopsis thaliana (Mouse-ear cress).